The chain runs to 71 residues: Translation initiation factor IF-1 (71 aa).

The S1-like domain maps to 1 to 71; sequence MSKDDLIQFT…LTKGRVIHRH (71 aa).

The protein belongs to the IF-1 family. As to quaternary structure, component of the 30S ribosomal translation pre-initiation complex which assembles on the 30S ribosome in the order IF-2 and IF-3, IF-1 and N-formylmethionyl-tRNA(fMet); mRNA recruitment can occur at any time during PIC assembly.

Its subcellular location is the cytoplasm. One of the essential components for the initiation of protein synthesis. Stabilizes the binding of IF-2 and IF-3 on the 30S subunit to which N-formylmethionyl-tRNA(fMet) subsequently binds. Helps modulate mRNA selection, yielding the 30S pre-initiation complex (PIC). Upon addition of the 50S ribosomal subunit IF-1, IF-2 and IF-3 are released leaving the mature 70S translation initiation complex. The protein is Translation initiation factor IF-1 of Rickettsia conorii (strain ATCC VR-613 / Malish 7).